Reading from the N-terminus, the 683-residue chain is Long-chain-fatty-acid--CoA ligase 5 (683 aa).

Residues 12–32 (LPTPALICILTFGAAIFLWLI) traverse the membrane as a helical; Signal-anchor for type III membrane protein segment. A Phosphoserine modification is found at Ile-32. The Cytoplasmic segment spans residues 33–683 (TRPQPVLPLL…IDSLYEHIQD (651 aa)). Lys-361 carries the post-translational modification N6-acetyllysine.

It belongs to the ATP-dependent AMP-binding enzyme family. The cofactor is Mg(2+).

The protein resides in the mitochondrion. The protein localises to the endoplasmic reticulum. It localises to the mitochondrion outer membrane. It is found in the endoplasmic reticulum membrane. Its subcellular location is the cell membrane. The catalysed reaction is a long-chain fatty acid + ATP + CoA = a long-chain fatty acyl-CoA + AMP + diphosphate. It carries out the reaction (5Z,8Z,11Z,14Z)-eicosatetraenoate + ATP + CoA = (5Z,8Z,11Z,14Z)-eicosatetraenoyl-CoA + AMP + diphosphate. The enzyme catalyses hexadecanoate + ATP + CoA = hexadecanoyl-CoA + AMP + diphosphate. It catalyses the reaction (E)-hexadec-2-enoate + ATP + CoA = (2E)-hexadecenoyl-CoA + AMP + diphosphate. The catalysed reaction is 15-hydroxy-(5Z,8Z,11Z,13E)-eicosatetraenoate + ATP + CoA = 15-hydroxy-(5Z,8Z,11Z,13E)-eicosatetraenoyl-CoA + AMP + diphosphate. It carries out the reaction 12-hydroxy-(5Z,8Z,10E,14Z)-eicosatetraenoate + ATP + CoA = 12-hydroxy-(5Z,8Z,10E,14Z)-eicosatetraenoyl-CoA + AMP + diphosphate. The enzyme catalyses 5-hydroxy-(6E,8Z,11Z,14Z)-eicosatetraenoate + ATP + CoA = 5-hydroxy-(6E,8Z,11Z,14Z)-eicosatetraenoyl-CoA + AMP + diphosphate. It catalyses the reaction 14,15-epoxy-(5Z,8Z,11Z)-eicosatrienoate + ATP + CoA = 14,15-epoxy-(5Z,8Z,11Z)-eicosatrienoyl-CoA + AMP + diphosphate. The catalysed reaction is 11,12-epoxy-(5Z,8Z,14Z)-eicosatrienoate + ATP + CoA = 11,12-epoxy-(5Z,8Z,14Z)-eicosatrienoyl-CoA + AMP + diphosphate. It carries out the reaction (9Z)-octadecenoate + ATP + CoA = (9Z)-octadecenoyl-CoA + AMP + diphosphate. In terms of biological role, catalyzes the conversion of long-chain fatty acids to their active form acyl-CoAs for both synthesis of cellular lipids, and degradation via beta-oxidation. ACSL5 may activate fatty acids from exogenous sources for the synthesis of triacylglycerol destined for intracellular storage. Utilizes a wide range of saturated fatty acids with a preference for C16-C18 unsaturated fatty acids. It was suggested that it may also stimulate fatty acid oxidation. At the villus tip of the crypt-villus axis of the small intestine may sensitize epithelial cells to apoptosis specifically triggered by the death ligand TRAIL. May have a role in the survival of glioma cells. This Homo sapiens (Human) protein is Long-chain-fatty-acid--CoA ligase 5.